The sequence spans 58 residues: MSKTVVRKNESLDDALRRFKRAVTKAGTLQETRKREFYEKPSVKRKRKSEAARKRKKF.

The disordered stretch occupies residues 37-58 (FYEKPSVKRKRKSEAARKRKKF). Residues 43–58 (VKRKRKSEAARKRKKF) show a composition bias toward basic residues.

The protein belongs to the bacterial ribosomal protein bS21 family.

The polypeptide is Small ribosomal subunit protein bS21 (Streptococcus sanguinis (strain SK36)).